Here is a 672-residue protein sequence, read N- to C-terminus: Glycerophosphocholine phosphodiesterase GPCPD1 (672 aa).

In terms of domain architecture, CBM20 spans 1 to 113; the sequence is MTPSQVTFEI…IIIDDGQFGI (113 aa). Substrate is bound by residues Arg68 and 86 to 87; that span reads HK. Residue Ser175 is modified to Phosphoserine. Residues 318–618 form the GP-PDE domain; that stretch reads PLDVGHRGAG…DRIYDWMPEQ (301 aa). A Phosphotyrosine modification is found at Tyr608.

This sequence belongs to the glycerophosphoryl diester phosphodiesterase family.

The protein localises to the cytoplasm. It is found in the cytosol. The enzyme catalyses sn-glycerol 3-phosphocholine + H2O = sn-glycerol 3-phosphate + choline + H(+). May be involved in the negative regulation of skeletal muscle differentiation, independently of its glycerophosphocholine phosphodiesterase activity. In Rattus norvegicus (Rat), this protein is Glycerophosphocholine phosphodiesterase GPCPD1 (Gpcpd1).